Here is a 553-residue protein sequence, read N- to C-terminus: Protein YloV (553 aa).

Positions 9–201 (RTFAEMILAG…LLCVYEGFLA (193 aa)) constitute a DhaL domain.

This is Protein YloV (yloV) from Bacillus subtilis (strain 168).